Reading from the N-terminus, the 211-residue chain is MEKIKIPKATAKRLPLYYRYLLILNEEGKDKVSSTELSEAVQVDSASIRRDFSYFGALGKRGYGYDVKNLLSFFKKILNQDTLTNVALIGVGNLGRALLNYNFKRSNNIRISCAFDINKEITGRILSGVPVYDMEDLKQQLSDQQISIAILTVPSTAAQRTTDEMVDAGVKGIMNFTPIRLSAPADVRVQNVDLATELQTLIYFLDSEKEN.

Positions 16-55 form a DNA-binding region, H-T-H motif; it reads LYYRYLLILNEEGKDKVSSTELSEAVQVDSASIRRDFSYF. 90–95 serves as a coordination point for NAD(+); it reads GVGNLG.

It belongs to the transcriptional regulatory Rex family. As to quaternary structure, homodimer.

The protein localises to the cytoplasm. Its function is as follows. Modulates transcription in response to changes in cellular NADH/NAD(+) redox state. In Lactobacillus acidophilus (strain ATCC 700396 / NCK56 / N2 / NCFM), this protein is Redox-sensing transcriptional repressor Rex.